The chain runs to 106 residues: L-rhamnose mutarotase (106 aa).

Y20 serves as a coordination point for substrate. H24 acts as the Proton donor in catalysis. Residues Y43 and W78–W79 each bind substrate.

It belongs to the rhamnose mutarotase family. In terms of assembly, homodimer.

It localises to the cytoplasm. It catalyses the reaction alpha-L-rhamnose = beta-L-rhamnose. The protein operates within carbohydrate metabolism; L-rhamnose metabolism. Its function is as follows. Involved in the anomeric conversion of L-rhamnose. This is L-rhamnose mutarotase from Rhizobium etli (strain ATCC 51251 / DSM 11541 / JCM 21823 / NBRC 15573 / CFN 42).